The chain runs to 508 residues: CUGBP Elav-like family member 2 (508 aa).

Necessary for RNA-binding, TNNT2 exon 5 and NMDA R1 exon 21 inclusion stretches follow at residues 1–283 and 357–508; these read MRCP…LQNL and LAGM…SKPY. RRM domains lie at 40–123, 132–212, and 423–501; these read IKMF…PADS, RKLF…FADT, and ANLF…LKRS.

This sequence belongs to the CELF/BRUNOL family. As to quaternary structure, interacts with A1CF. Expressed in tongue, spleen and brain (at protein level). Expressed in liver, thigh, stomach, lung and heart to very low levels (at protein level). Expressed in heart, brain, lung and muscle.

The protein resides in the nucleus. It is found in the cytoplasm. RNA-binding protein implicated in the regulation of several post-transcriptional events. Involved in pre-mRNA alternative splicing, mRNA translation and stability. Mediates exon inclusion and/or exclusion in pre-mRNA that are subject to tissue-specific and developmentally regulated alternative splicing. Specifically activates exon 5 inclusion of TNNT2 in embryonic, but not adult, skeletal muscle. Activates TNNT2 exon 5 inclusion by antagonizing the repressive effect of PTB. Acts both as an activator and as a repressor of a pair of coregulated exons: promotes inclusion of the smooth muscle (SM) exon but exclusion of the non-muscle (NM) exon in actinin pre-mRNAs. Promotes inclusion of exonS 21 and exclusion of exon 5 of the NMDA receptor R1 pre-mRNA. Involved in the apoB RNA editing activity. Increases COX2 mRNA stability and inhibits COX2 mRNA translation in epithelial cells after radiation injury. Modulates the cellular apoptosis program by regulating COX2-mediated prostaglandin E2 (PGE2) expression. Binds to (CUG)n triplet repeats in the 3'-UTR of transcripts such as DMPK. Binds to the muscle-specific splicing enhancer (MSE) intronic sites flanking the TNNT2 alternative exon 5. Binds preferentially to UG-rich sequences, in particular UG repeat and UGUU motifs. Binds to apoB mRNA, specifically to AU-rich sequences located immediately upstream of the edited cytidine. Binds AU-rich sequences in the 3'-UTR of COX2 mRNA. Binds to an intronic RNA element responsible for the silencing of exon 21 splicing. Binds to (CUG)n repeats. May be a specific regulator of miRNA biogenesis. Binds to primary microRNA pri-MIR140 and, with CELF1, negatively regulates the processing to mature miRNA. This is CUGBP Elav-like family member 2 (Celf2) from Mus musculus (Mouse).